We begin with the raw amino-acid sequence, 642 residues long: Fork head protein homolog 2 (642 aa).

The segment at 1 to 23 (MTVRRLESKSEHISDDEERKEQL) is disordered. The FHA domain maps to 96-160 (IILGREPANP…NGIKVDGKLF (65 aa)). Positions 223–318 (KPPYSYSVMI…AKTRKTPRKR (96 aa)) form a DNA-binding region, fork-head. The span at 310 to 319 (KTRKTPRKRS) shows a compositional bias: basic residues. Disordered regions lie at residues 310-392 (KTRK…ETYK), 519-574 (VSDS…TEEN), and 586-642 (ATME…KSSA). Ser319, Ser321, Ser322, Ser334, and Ser336 each carry phosphoserine. Positions 348–362 (TSIPAAEPASSTTSA) are enriched in low complexity. Polar residues-rich tracts occupy residues 363–381 (RDQTPSTPKDVGSPSTAET), 519–552 (VSDSPTMNLANSNSKSSPVAVQRVSTLPQASANK), and 599–642 (TPTS…KSSA). A phosphoserine mark is found at Ser375, Ser535, and Ser626.

In terms of processing, phosphorylated. Occurs periodically during mitosis.

It is found in the nucleus. Required for promoter sequence element PCB-driven, M-phase-specific transcription. Acts as a transcriptional activator with a role in the regulation of mitosis. Binds, cooperatively with mcm1, the CLB cluster regulatory elements throughout the cell cycle. Regulates the periodic transcription of cdc15 and spo12. Required for the correct timing, positioning and contraction of the division septum. In Schizosaccharomyces pombe (strain 972 / ATCC 24843) (Fission yeast), this protein is Fork head protein homolog 2 (fkh2).